Here is a 246-residue protein sequence, read N- to C-terminus: Proteasome subunit beta type-4 (246 aa).

Residues 1–23 (MTTFSVPIDNGDSMKIAEEESQR) constitute a propeptide that is removed on maturation. Residue Thr24 is the Nucleophile of the active site.

Belongs to the peptidase T1B family. In terms of assembly, component of the 20S core complex of the 26S proteasome. The 26S proteasome is composed of a core protease (CP), known as the 20S proteasome, capped at one or both ends by the 19S regulatory particle (RP/PA700). The 20S proteasome core is composed of 28 subunits that are arranged in four stacked rings, resulting in a barrel-shaped structure. The two end rings are each formed by seven alpha subunits, and the two central rings are each formed by seven beta subunits. The catalytic chamber with the active sites is on the inside of the barrel. As to expression, ubiquitous low levels, higher expression in siliques and flowers.

It localises to the cytoplasm. The protein resides in the nucleus. Its function is as follows. Non-catalytic component of the proteasome, a multicatalytic proteinase complex which is characterized by its ability to cleave peptides with Arg, Phe, Tyr, Leu, and Glu adjacent to the leaving group at neutral or slightly basic pH. The proteasome has an ATP-dependent proteolytic activity. The sequence is that of Proteasome subunit beta type-4 (PBG1) from Arabidopsis thaliana (Mouse-ear cress).